The following is a 98-amino-acid chain: Co-chaperonin GroES (98 aa).

This sequence belongs to the GroES chaperonin family. As to quaternary structure, heptamer of 7 subunits arranged in a ring. Interacts with the chaperonin GroEL.

It is found in the cytoplasm. Its function is as follows. Together with the chaperonin GroEL, plays an essential role in assisting protein folding. The GroEL-GroES system forms a nano-cage that allows encapsulation of the non-native substrate proteins and provides a physical environment optimized to promote and accelerate protein folding. GroES binds to the apical surface of the GroEL ring, thereby capping the opening of the GroEL channel. This Clavibacter michiganensis subsp. michiganensis (strain NCPPB 382) protein is Co-chaperonin GroES.